Here is a 157-residue protein sequence, read N- to C-terminus: Serine-protein kinase RsbW (157 aa).

It belongs to the anti-sigma-factor family.

It carries out the reaction L-seryl-[protein] + ATP = O-phospho-L-seryl-[protein] + ADP + H(+). The catalysed reaction is L-threonyl-[protein] + ATP = O-phospho-L-threonyl-[protein] + ADP + H(+). Negative regulator of sigma-B activity. Phosphorylates and inactivates its specific antagonist protein, RsbV. Upon phosphorylation of RsbV, RsbW is released and binds to sigma-B, thereby blocking its ability to form an RNA polymerase holoenzyme (E-sigma-B). This is Serine-protein kinase RsbW from Listeria monocytogenes serovar 1/2a (strain ATCC BAA-679 / EGD-e).